Reading from the N-terminus, the 223-residue chain is Ubiquitin-conjugating enzyme E2 S-A (223 aa).

The UBC core domain maps to 11–157 (HIIRLVYKEV…ARLLTEIHGG (147 aa)). The active-site Glycyl thioester intermediate is the cysteine 95. The disordered stretch occupies residues 170-223 (QDLASGASASSADPMIPGVLGGAEGPMAKKHAGERDKKLAAKKKLDKKRALRRL). Residues 209–223 (AAKKKLDKKRALRRL) show a composition bias toward basic residues.

This sequence belongs to the ubiquitin-conjugating enzyme family.

The enzyme catalyses S-ubiquitinyl-[E1 ubiquitin-activating enzyme]-L-cysteine + [E2 ubiquitin-conjugating enzyme]-L-cysteine = [E1 ubiquitin-activating enzyme]-L-cysteine + S-ubiquitinyl-[E2 ubiquitin-conjugating enzyme]-L-cysteine.. It participates in protein modification; protein ubiquitination. Its function is as follows. Catalyzes the covalent attachment of ubiquitin to other proteins. Acts as an essential factor of the anaphase promoting complex/cyclosome (APC/C), a cell cycle-regulated ubiquitin ligase that controls progression through mitosis. Acts by specifically elongating 'Lys-11'-linked polyubiquitin chains initiated by the E2 enzyme ube2c/ubch10 on APC/C substrates, enhancing the degradation of APC/C substrates by the proteasome and promoting mitotic exit. In Xenopus laevis (African clawed frog), this protein is Ubiquitin-conjugating enzyme E2 S-A (ube2s-a).